The chain runs to 104 residues: Iron-sulfur cluster assembly protein CyaY (104 aa).

The protein belongs to the frataxin family.

Functionally, involved in iron-sulfur (Fe-S) cluster assembly. May act as a regulator of Fe-S biogenesis. In Vibrio campbellii (strain ATCC BAA-1116), this protein is Iron-sulfur cluster assembly protein CyaY.